The chain runs to 32 residues: DECFSPGTFCGFKPGLCCSARCFSLFCISLEF.

Intrachain disulfides connect Cys3-Cys18, Cys10-Cys22, and Cys17-Cys27. 4-hydroxyproline occurs at positions 6 and 14.

The protein belongs to the conotoxin O1 superfamily. As to expression, expressed by the venom duct.

It localises to the secreted. Delta-conotoxins bind to site 6 of voltage-gated sodium channels (Nav) and inhibit the inactivation process. This toxin acts on Nav1.2/SCN2A, Nav1.3/SCN3A and Nav1.6/SCN8A (EC(50)=1.7 uM). The protein is Delta-conotoxin-like CnVID of Conus consors (Singed cone).